An 83-amino-acid chain; its full sequence is Cytochrome b559 subunit alpha (83 aa).

The helical transmembrane segment at 21–35 threads the bilayer; it reads VIHSITIPSLFIAGW. A heme-binding site is contributed by histidine 23.

The protein belongs to the PsbE/PsbF family. Heterodimer of an alpha subunit and a beta subunit. PSII is composed of 1 copy each of membrane proteins PsbA, PsbB, PsbC, PsbD, PsbE, PsbF, PsbH, PsbI, PsbJ, PsbK, PsbL, PsbM, PsbT, PsbX, PsbY, PsbZ, Psb30/Ycf12, at least 3 peripheral proteins of the oxygen-evolving complex and a large number of cofactors. It forms dimeric complexes. Heme b serves as cofactor.

Its subcellular location is the plastid. It localises to the chloroplast thylakoid membrane. Its function is as follows. This b-type cytochrome is tightly associated with the reaction center of photosystem II (PSII). PSII is a light-driven water:plastoquinone oxidoreductase that uses light energy to abstract electrons from H(2)O, generating O(2) and a proton gradient subsequently used for ATP formation. It consists of a core antenna complex that captures photons, and an electron transfer chain that converts photonic excitation into a charge separation. This is Cytochrome b559 subunit alpha from Ginkgo biloba (Ginkgo).